The chain runs to 503 residues: Glucosaminyl-phosphatidylinositol-acyltransferase PIGW (503 aa).

Residues 1–21 lie on the Lumenal side of the membrane; sequence MSQKQLKEAFVRNLSGTSVLE. Asparagine 13 carries an N-linked (GlcNAc...) asparagine glycan. Residues 22-42 traverse the membrane as a helical segment; it reads VTQGLCFPAFCILCRGLWIIF. At 43 to 48 the chain is on the cytoplasmic side; that stretch reads SQHVCS. A helical transmembrane segment spans residues 49–71; sequence FSNTWSTRFLMDFVVLIVPLVIT. The Lumenal portion of the chain corresponds to 72 to 74; sequence LTV. Residues 75-97 traverse the membrane as a helical segment; that stretch reads LSSFILLENLTVIVWGAWLLYQI. Topologically, residues 98-131 are cytoplasmic; sequence YHRRTCYAKVPVQKVFANFLKISLESEYNPAITC. A helical membrane pass occupies residues 132–152; sequence YRVINSVFTAIAILAVDFPLF. Residues 153-160 lie on the Lumenal side of the membrane; that stretch reads PRRFAKTE. Residues 161–181 traverse the membrane as a helical segment; the sequence is LYGTGAMDFGVGGFIFGAAMV. At 182–201 the chain is on the cytoplasmic side; it reads CPEVRRKSIEESRFNYLRKS. Residues 202–222 form a helical membrane-spanning segment; the sequence is LYSVWPLVFLGMGRLVIIKSI. The Lumenal segment spans residues 223 to 236; sequence GYQEHSTEYGIHWN. The helical transmembrane segment at 237-257 threads the bilayer; that stretch reads FFFTIIVVRLVTSLLLIIFPL. Residues 258 to 259 are Cytoplasmic-facing; that stretch reads NK. The helical transmembrane segment at 260–280 threads the bilayer; that stretch reads SWIVAVSITVVYQLALDYTPL. Residues 281-304 lie on the Lumenal side of the membrane; it reads KRILLYGTDGSGTRVGFLNANREG. The chain crosses the membrane as a helical span at residues 305–325; that stretch reads IISTLGYVTIHMAGVQTGLYV. Residues 326-339 lie on the Cytoplasmic side of the membrane; that stretch reads LKGRAQVRDWIKAT. Residues 340–360 form a helical membrane-spanning segment; sequence CWVFSVAVGFFISLHIVQVNI. At 361 to 380 the chain is on the lumenal side; sequence EAVSRRMANLAFCLWVVASS. A helical membrane pass occupies residues 381–401; it reads LMLLSCLLLSGIILSFAQFLI. Over 402–447 the chain is Cytoplasmic; it reads KGSLVPCSWKLIQSPTTHKNHSESLILEAEKNQPSLCLITALNRNQ. A Phosphoserine modification is found at serine 415. A helical transmembrane segment spans residues 448-468; sequence LFFFLLSNITTGLINLTMDTL. Residues 469–472 are Lumenal-facing; sequence HTGA. A helical membrane pass occupies residues 473-493; that stretch reads LWTLVVLSIYMFTNCLVIYVL. The Cytoplasmic segment spans residues 494–503; the sequence is DLQGKTIKFW.

It belongs to the PIGW family.

Its subcellular location is the endoplasmic reticulum membrane. It functions in the pathway glycolipid biosynthesis; glycosylphosphatidylinositol-anchor biosynthesis. Acyltransferase that catalyzes the acyl transfer from an acyl-CoA at the 2-OH position of the inositol ring of glucosaminyl phosphatidylinositol (GlcN-PI) to generate GlcN-(acyl)PI and participates in the fourth step of GPI-anchor biosynthesi. Required for the transport of GPI-anchored proteins to the plasma membrane. Acetylation during GPI-anchor biosynthesis is not essential for the subsequent mannosylation and is usually removed soon after the attachment of GPIs to proteins. This chain is Glucosaminyl-phosphatidylinositol-acyltransferase PIGW, found in Mus musculus (Mouse).